The sequence spans 175 residues: Translation initiation factor IF-3, chloroplastic (175 aa).

It belongs to the IF-3 family. Monomer.

The protein localises to the plastid. It localises to the chloroplast. In terms of biological role, IF-3 binds to the 30S ribosomal subunit and shifts the equilibrium between 70S ribosomes and their 50S and 30S subunits in favor of the free subunits, thus enhancing the availability of 30S subunits on which protein synthesis initiation begins. This chain is Translation initiation factor IF-3, chloroplastic, found in Cyanidioschyzon merolae (strain NIES-3377 / 10D) (Unicellular red alga).